The sequence spans 401 residues: MATTILPLILFISSLAIASSSPSRTPHAIVNEVHKSINASRRNLGYLSCGTGNPIDDCWRCDPNWANNRQRLADCAIGFGKNAMGGRNGRIYVVTDPGNDDPVNPVPGTLRYAVIQDEPLWIIFKRDMVIQLRQELVMNSHKTIDGRGVNVHIGNGPCITIHYASNIIIHGIHIHDCKQAGNGNIRNSPHHSGWWTQSDGDGISIFASKDIWIDHNSLSNCHDGLIDAIHGSTAITISNNYMTHHDKVMLLGHSDSYTQDKNMQVTIAFNHFGEGLVQRMPRCRHGYFHVVNNDYTHWEMYAIGGSASPTIYSQGNRFLAPNTRFDKEVTKHENAPESEWKNWNWRSEGDLMLNGAYFRESGGRAASSFARASSLSGRPSTLVASMTRSAGALVCRKGSRC.

Residues 1–20 (MATTILPLILFISSLAIASS) form the signal peptide. An N-linked (GlcNAc...) asparagine glycan is attached at asparagine 38. Ca(2+) contacts are provided by aspartate 199, aspartate 223, and aspartate 227. Arginine 279 is an active-site residue.

The protein belongs to the polysaccharide lyase 1 family. It depends on Ca(2+) as a cofactor. Expressed in sites of vascular differentiation and in new primordia on the flank of the shoot meristem.

The catalysed reaction is Eliminative cleavage of (1-&gt;4)-alpha-D-galacturonan to give oligosaccharides with 4-deoxy-alpha-D-galact-4-enuronosyl groups at their non-reducing ends.. It participates in glycan metabolism; pectin degradation; 2-dehydro-3-deoxy-D-gluconate from pectin: step 2/5. In terms of biological role, involved in the degradation of pectin. May assist in the removal and modification of an existing pectin matrix in order to allow the deposition of newly synthesized walls polymers for a specialized function or to create an architecture that is extensible. The chain is Pectate lyase from Zinnia elegans (Garden zinnia).